A 245-amino-acid polypeptide reads, in one-letter code: Orotidine 5'-phosphate decarboxylase (245 aa).

Residues Asp22, Lys44, 71 to 80 (DLKFHDIPNT), Thr131, Arg192, Gln201, Gly221, and Arg222 each bind substrate. Lys73 serves as the catalytic Proton donor.

It belongs to the OMP decarboxylase family. Type 1 subfamily. In terms of assembly, homodimer.

It carries out the reaction orotidine 5'-phosphate + H(+) = UMP + CO2. The protein operates within pyrimidine metabolism; UMP biosynthesis via de novo pathway; UMP from orotate: step 2/2. Its function is as follows. Catalyzes the decarboxylation of orotidine 5'-monophosphate (OMP) to uridine 5'-monophosphate (UMP). This is Orotidine 5'-phosphate decarboxylase from Escherichia coli (strain K12 / MC4100 / BW2952).